The chain runs to 251 residues: Hydroxyacylglutathione hydrolase (251 aa).

The Zn(2+) site is built by histidine 59, histidine 61, aspartate 63, histidine 64, histidine 118, aspartate 141, and histidine 179.

This sequence belongs to the metallo-beta-lactamase superfamily. Glyoxalase II family. Monomer. Zn(2+) is required as a cofactor.

It carries out the reaction an S-(2-hydroxyacyl)glutathione + H2O = a 2-hydroxy carboxylate + glutathione + H(+). It participates in secondary metabolite metabolism; methylglyoxal degradation; (R)-lactate from methylglyoxal: step 2/2. Thiolesterase that catalyzes the hydrolysis of S-D-lactoyl-glutathione to form glutathione and D-lactic acid. This chain is Hydroxyacylglutathione hydrolase, found in Prochlorococcus marinus (strain NATL2A).